A 551-amino-acid polypeptide reads, in one-letter code: Intestinal-type alkaline phosphatase 2 (551 aa).

An N-terminal signal peptide occupies residues 1-19 (MQGAWVLLLLGFRLQLSLS). Aspartate 61 is a Mg(2+) binding site. The Zn(2+) site is built by aspartate 61 and serine 111. Serine 111 functions as the Phosphoserine intermediate in the catalytic mechanism. A disulfide bond links cysteine 140 and cysteine 202. Asparagine 141 carries an N-linked (GlcNAc...) asparagine glycan. Serine 174 is a binding site for Mg(2+). Position 235 (glutamate 235) interacts with Ca(2+). N-linked (GlcNAc...) asparagine glycosylation is present at asparagine 241. Ca(2+) is bound by residues phenylalanine 288, glutamate 289, and aspartate 304. Glutamate 330 contributes to the Mg(2+) binding site. The Zn(2+) site is built by aspartate 335, histidine 339, aspartate 376, and histidine 377. Asparagine 426 is a glycosylation site (N-linked (GlcNAc...) asparagine). Cysteine 485 and cysteine 492 are disulfide-bonded. The disordered stretch occupies residues 496–537 (PPADENRPTTPVQNSTTTTTTTTTTTTTTTTTRVQNSASSLG). The N-linked (GlcNAc...) asparagine glycan is linked to asparagine 509. The span at 511–527 (TTTTTTTTTTTTTTTTT) shows a compositional bias: low complexity. The segment covering 528 to 537 (RVQNSASSLG) has biased composition (polar residues). Asparagine 531 carries GPI-anchor amidated asparagine lipidation. Residues 532-551 (SASSLGPATAPLAWHYWPRR) constitute a propeptide, removed in mature form.

This sequence belongs to the alkaline phosphatase family. As to quaternary structure, homodimer. The cofactor is Mg(2+). Requires Zn(2+) as cofactor. Ca(2+) serves as cofactor.

The protein resides in the cell membrane. It catalyses the reaction a phosphate monoester + H2O = an alcohol + phosphate. Alkaline phosphatase that can hydrolyze various phosphate compounds. This Rattus norvegicus (Rat) protein is Intestinal-type alkaline phosphatase 2.